The primary structure comprises 32 residues: MSDIN-like toxin proprotein 2 (32 aa).

The propeptide occupies M1–P10. The segment at residues A11–P17 is a cross-link (cyclopeptide (Ala-Pro)). The propeptide occupies C18 to K32.

Belongs to the MSDIN fungal toxin family. Processed by the macrocyclase-peptidase enzyme POPB to yield a toxic cyclic heptapeptide. POPB first removes 10 residues from the N-terminus. Conformational trapping of the remaining peptide forces the enzyme to release this intermediate rather than proceed to macrocyclization. The enzyme rebinds the remaining peptide in a different conformation and catalyzes macrocyclization of the N-terminal 7 residues.

Functionally, probable toxin that belongs to the MSDIN-like toxin family responsible for a large number of food poisoning cases and deaths. The protein is MSDIN-like toxin proprotein 2 of Amanita rimosa.